The following is a 443-amino-acid chain: Protein AknT (443 aa).

The protein belongs to the cytochrome P450 family.

In terms of biological role, involved in the biosynthesis of the anthracycline antitumor agent aclacinomycin A. AknT is required for the glycosylation of aklavinone aglycone by AknS to yield aclacinomycin T (rhodosaminyl-aklavinone). This Streptomyces galilaeus protein is Protein AknT.